Here is a 322-residue protein sequence, read N- to C-terminus: Probable cardiolipin synthase (CMP-forming) (322 aa).

3 consecutive transmembrane segments (helical) span residues 143-163, 199-219, and 289-309; these read IGYVIVQGDFTLGMSLLAFAG, LVISLCYTDLLPMWLMGIVVF, and LQGLWYLTGLTTAATALSYVM.

This sequence belongs to the CDP-alcohol phosphatidyltransferase class-I family.

The protein resides in the mitochondrion inner membrane. The catalysed reaction is a CDP-1,2-diacyl-sn-glycerol + a 1,2-diacyl-sn-glycero-3-phospho-(1'-sn-glycerol) = a cardiolipin + CMP + H(+). In terms of biological role, catalyzes the synthesis of cardiolipin (CL) (diphosphatidylglycerol) by specifically transferring a phosphatidyl group from CDP-diacylglycerol to phosphatidylglycerol (PG). CL is a key phospholipid in mitochondrial membranes and plays important roles in maintaining the functional integrity and dynamics of mitochondria under both optimal and stress conditions. In Drosophila melanogaster (Fruit fly), this protein is Probable cardiolipin synthase (CMP-forming) (CLS).